Consider the following 497-residue polypeptide: MDHTVKSKTADTVSSPCAVVGVFERRRLSPAAKAVDEASGGAITAALKRGDIEAKPGQTRLLTDLDNVKAARVLLVGLGVERDLDERTYRKAVTAAAQAAQDCGAGEATFYLPEVEVKTRDLAWRVQQLAIGVTGALYRFDDMKSEAETPRKPLKKLALGVADKAEAKVADEALAQGMAVGRGMSLARDLGNLPGNVCTPSYLADQAKALGKRFDKLKVQSLDRKDMKKLGMGALLAVAQGSQEEPRLIAMEWNGGKKDEQPYVLVGKGITFDTGGISLKPGAAMDEMKFDMCGAASVFGTLQAVAEMNLPINVVGVVPASDNMPDGKATRPGDIIQTLSGQTVEVLNTDAEGRLVLCDALTWSERFKPKEIVDIATLTGACIIALGHHRSAVLGNHPPLVKALQDAGETSGDKCWELPLDPEYDEQLKSNFADMANIGGRPAGTITAASFLARFTKRYQWAHLDIAGTAWLTGEQKGATGRPVPLLTRYLMDRAGA.

Mn(2+)-binding residues include lysine 268 and aspartate 273. Residue lysine 280 is part of the active site. Mn(2+) contacts are provided by aspartate 291, aspartate 350, and glutamate 352. Arginine 354 is an active-site residue.

The protein belongs to the peptidase M17 family. Mn(2+) serves as cofactor.

The protein resides in the cytoplasm. It catalyses the reaction Release of an N-terminal amino acid, Xaa-|-Yaa-, in which Xaa is preferably Leu, but may be other amino acids including Pro although not Arg or Lys, and Yaa may be Pro. Amino acid amides and methyl esters are also readily hydrolyzed, but rates on arylamides are exceedingly low.. The enzyme catalyses Release of an N-terminal amino acid, preferentially leucine, but not glutamic or aspartic acids.. Functionally, presumably involved in the processing and regular turnover of intracellular proteins. Catalyzes the removal of unsubstituted N-terminal amino acids from various peptides. The protein is Probable cytosol aminopeptidase of Alkalilimnicola ehrlichii (strain ATCC BAA-1101 / DSM 17681 / MLHE-1).